The chain runs to 228 residues: Endo-1,4-beta-xylanase B (228 aa).

Residues 1–19 form the signal peptide; the sequence is MVSFTYLLAAVSAVTGAVA. A GH11 domain is found at 37–227; the sequence is KRTSPTTGVN…SSGQATMTVS (191 aa). Glu122 acts as the Nucleophile in catalysis. The Proton donor role is filled by Glu214.

The protein belongs to the glycosyl hydrolase 11 (cellulase G) family.

Its subcellular location is the secreted. The catalysed reaction is Endohydrolysis of (1-&gt;4)-beta-D-xylosidic linkages in xylans.. Its pathway is glycan degradation; xylan degradation. With respect to regulation, inhibited by the proteinaceous endoxylanase inhibitor I from T.aestivum (TAXI-I). Endo-1,4-beta-xylanase involved in the hydrolysis of xylan, a major structural heterogeneous polysaccharide found in plant biomass representing the second most abundant polysaccharide in the biosphere, after cellulose. Plays an important role in causing fusarium head blight (FHB) on cereal crops. Induces cell death and hydrogen peroxide accumulation in infected wheat leaves. The polypeptide is Endo-1,4-beta-xylanase B (XYLB) (Gibberella zeae (strain ATCC MYA-4620 / CBS 123657 / FGSC 9075 / NRRL 31084 / PH-1) (Wheat head blight fungus)).